A 101-amino-acid chain; its full sequence is Small ribosomal subunit protein uS14 (101 aa).

Belongs to the universal ribosomal protein uS14 family. In terms of assembly, part of the 30S ribosomal subunit. Contacts proteins S3 and S10.

Its function is as follows. Binds 16S rRNA, required for the assembly of 30S particles and may also be responsible for determining the conformation of the 16S rRNA at the A site. The sequence is that of Small ribosomal subunit protein uS14 from Ruegeria sp. (strain TM1040) (Silicibacter sp.).